The chain runs to 537 residues: MGTYKKEKSRIGREGANEKKPGNLRVKGENFYRNAKDVARVNMYRGGKAKYNAAGELVRAAEFQSSEVPKARIQPDRRWFNNTRVIAQPTLTQFREAMGQKLNDPYQVLLRRNKLPMSLLQENTEIPKVRVLESEPFENTFGPKSQRKRPKISFDSVAELAKESDEKQNAYEEKIEERILANPDESDDVMLAARDAIFSKGQSKRIWNELYKVIDSSDVLIQVLDARDPVGTRCGTVERYLRNEASHKHMILVLNKVDLVPTSVAAAWVKILAKEYPTIAFHASINNSFGKGSLIQILRQFASLHSDKKQISVGLIGFPNAGKSSIINTLRKKKVCNVAPIPGETKVWQYVALMKRIFLIDCPGIVPPSSNDSDAELLLKGVVRVENVSNPEAYIPTVLSRCKVKHLERTYEISGWNDSTEFLAKLAKKGGRLLKGGEPDEASVAKMVLNDFMRGKIPWFIGPKGLSSSNDEINSSQKVATQQTEGSDQDGEEAEEEWHGISDDGKADESESTKPVAEGSASESTDESAVDDNKNRS.

Positions 1-24 (MGTYKKEKSRIGREGANEKKPGNL) are disordered. Serine 186 carries the phosphoserine modification. Residues 207–368 (WNELYKVIDS…LIDCPGIVPP (162 aa)) form the CP-type G domain. GTP is bound by residues 317-324 (GFPNAGKS) and 361-365 (DCPGI). The span at 468-486 (SSNDEINSSQKVATQQTEG) shows a compositional bias: polar residues. The interval 468–537 (SSNDEINSSQ…SAVDDNKNRS (70 aa)) is disordered. Position 484 is a phosphothreonine (threonine 484). At serine 487 the chain carries Phosphoserine. The segment covering 487–496 (SDQDGEEAEE) has biased composition (acidic residues). Over residues 497 to 512 (EWHGISDDGKADESES) the composition is skewed to basic and acidic residues.

This sequence belongs to the TRAFAC class YlqF/YawG GTPase family. NOG2 subfamily.

The protein resides in the nucleus. It is found in the nucleolus. GTPase that associates with pre-60S ribosomal subunits in the nucleolus and is required for their nuclear export and maturation. This chain is Nucleolar GTP-binding protein 2 (nog2), found in Schizosaccharomyces pombe (strain 972 / ATCC 24843) (Fission yeast).